The sequence spans 457 residues: Ribosomal RNA-processing protein 8 (457 aa).

The tract at residues 47–237 (LEAASLSQQT…KSDSQESRAG (191 aa)) is disordered. Polar residues predominate over residues 51–61 (SLSQQTPSLPG). Ser62, Ser64, and Ser105 each carry phosphoserine. Over residues 129-138 (GEEKGKRKCQ) the composition is skewed to basic and acidic residues. The segment covering 139–183 (EYSSLHLTQPLDSVDQTVHNSRTSTATIDPSKPSPESMSPNSSHT) has biased composition (polar residues). Phosphoserine occurs at positions 172 and 177. Residues 184–203 (LSRKQWRNRQKNKRRHKNKF) are compositionally biased toward basic residues. S-adenosyl-L-methionine is bound by residues His282, Gly317, Asp335, Asp347, Met348, and Cys364.

The protein belongs to the methyltransferase superfamily. RRP8 family. As to quaternary structure, component of the eNoSC complex, composed of SIRT1, SUV39H1 and RRP8.

It is found in the nucleus. It localises to the nucleolus. Its function is as follows. Essential component of the eNoSC (energy-dependent nucleolar silencing) complex, a complex that mediates silencing of rDNA in response to intracellular energy status and acts by recruiting histone-modifying enzymes. The eNoSC complex is able to sense the energy status of cell: upon glucose starvation, elevation of NAD(+)/NADP(+) ratio activates SIRT1, leading to histone H3 deacetylation followed by dimethylation of H3 at 'Lys-9' (H3K9me2) by SUV39H1 and the formation of silent chromatin in the rDNA locus. In the complex, RRP8 binds to H3K9me2 and probably acts as a methyltransferase. Its substrates are however unknown. The polypeptide is Ribosomal RNA-processing protein 8 (Rrp8) (Mus musculus (Mouse)).